The sequence spans 322 residues: Mycothiol acetyltransferase (322 aa).

N-acetyltransferase domains lie at Ser5–Asp150 and Val160–Gly322. 1D-myo-inositol 2-(L-cysteinylamino)-2-deoxy-alpha-D-glucopyranoside is bound at residue Glu36. Acetyl-CoA-binding positions include Leu79–Val81 and Arg87–Thr92. Positions 187, 226, and 252 each coordinate 1D-myo-inositol 2-(L-cysteinylamino)-2-deoxy-alpha-D-glucopyranoside. Val256 to Val258 serves as a coordination point for acetyl-CoA. A 1D-myo-inositol 2-(L-cysteinylamino)-2-deoxy-alpha-D-glucopyranoside-binding site is contributed by Tyr290. An acetyl-CoA-binding site is contributed by Asn295–Arg300.

Belongs to the acetyltransferase family. MshD subfamily. In terms of assembly, monomer.

It carries out the reaction 1D-myo-inositol 2-(L-cysteinylamino)-2-deoxy-alpha-D-glucopyranoside + acetyl-CoA = mycothiol + CoA + H(+). Its function is as follows. Catalyzes the transfer of acetyl from acetyl-CoA to desacetylmycothiol (Cys-GlcN-Ins) to form mycothiol. The sequence is that of Mycothiol acetyltransferase from Parafrankia sp. (strain EAN1pec).